The chain runs to 306 residues: Enoyl-CoA isomerase/hydratase MYCGRDRAFT_76805 (306 aa).

Substrate-binding positions include 103-107 and G150; that span reads AGADL.

The protein belongs to the enoyl-CoA hydratase/isomerase family.

The enzyme catalyses a (3S)-3-hydroxyacyl-CoA = a (2E)-enoyl-CoA + H2O. It catalyses the reaction a 4-saturated-(3S)-3-hydroxyacyl-CoA = a (3E)-enoyl-CoA + H2O. It participates in siderophore biosynthesis. In terms of biological role, enoyl-CoA isomerase/hydratase involved in the biosynthesis of a ferrichrome A-like siderophore which may contribute to organismal virulence. The first step of siderophore biosynthesis is performed by the HMG-CoA synthase (HMGS) MYCGRDRAFT_54740 which catalyzes the generation of HMG-CoA and CoA using acetoacetyl-CoA and acetyl-CoA as substrates. The enoyl-CoA isomerase/hydratase MYCGRDRAFT_76805 then catalyzes the conversion of HMG-CoA to methylglutaconyl-CoA. The acyltransferase MYCGRDRAFT_85486 then fuses methylglutaconyl-CoA with hydroxyornithine to yield methylglutaconyl hydroxyornithine. Methylglutaconyl hydroxyornithine is then available for use by the nonribosomal peptide synthetase NRPS2 to generate the ferrichrome A-like siderophore. The sequence is that of Enoyl-CoA isomerase/hydratase MYCGRDRAFT_76805 from Zymoseptoria tritici (strain CBS 115943 / IPO323) (Speckled leaf blotch fungus).